A 250-amino-acid polypeptide reads, in one-letter code: Hydroxyethylthiazole kinase (250 aa).

Met-39 serves as a coordination point for substrate. ATP-binding residues include Arg-114 and Thr-159. A substrate-binding site is contributed by Gly-186.

This sequence belongs to the Thz kinase family. Mg(2+) is required as a cofactor.

It catalyses the reaction 5-(2-hydroxyethyl)-4-methylthiazole + ATP = 4-methyl-5-(2-phosphooxyethyl)-thiazole + ADP + H(+). Its pathway is cofactor biosynthesis; thiamine diphosphate biosynthesis; 4-methyl-5-(2-phosphoethyl)-thiazole from 5-(2-hydroxyethyl)-4-methylthiazole: step 1/1. In terms of biological role, catalyzes the phosphorylation of the hydroxyl group of 4-methyl-5-beta-hydroxyethylthiazole (THZ). The sequence is that of Hydroxyethylthiazole kinase from Lactococcus lactis subsp. lactis (strain IL1403) (Streptococcus lactis).